The primary structure comprises 318 residues: N-acetyl-gamma-glutamyl-phosphate reductase (318 aa).

Residue cysteine 132 is part of the active site.

This sequence belongs to the NAGSA dehydrogenase family. Type 1 subfamily.

Its subcellular location is the cytoplasm. The catalysed reaction is N-acetyl-L-glutamate 5-semialdehyde + phosphate + NADP(+) = N-acetyl-L-glutamyl 5-phosphate + NADPH + H(+). It functions in the pathway amino-acid biosynthesis; L-arginine biosynthesis; N(2)-acetyl-L-ornithine from L-glutamate: step 3/4. In terms of biological role, catalyzes the NADPH-dependent reduction of N-acetyl-5-glutamyl phosphate to yield N-acetyl-L-glutamate 5-semialdehyde. This chain is N-acetyl-gamma-glutamyl-phosphate reductase, found in Azobacteroides pseudotrichonymphae genomovar. CFP2.